We begin with the raw amino-acid sequence, 255 residues long: D-aminoacyl-tRNA deacylase (255 aa).

It belongs to the DtdA deacylase family. Monomer. The cofactor is Zn(2+).

The catalysed reaction is a D-aminoacyl-tRNA + H2O = a tRNA + a D-alpha-amino acid + H(+). It catalyses the reaction glycyl-tRNA(Ala) + H2O = tRNA(Ala) + glycine + H(+). In terms of biological role, D-aminoacyl-tRNA deacylase with broad substrate specificity. By recycling D-aminoacyl-tRNA to D-amino acids and free tRNA molecules, this enzyme counteracts the toxicity associated with the formation of D-aminoacyl-tRNA entities in vivo. The protein is D-aminoacyl-tRNA deacylase of Picrophilus torridus (strain ATCC 700027 / DSM 9790 / JCM 10055 / NBRC 100828 / KAW 2/3).